The following is a 404-amino-acid chain: NADH-quinone oxidoreductase subunit D 2 (404 aa).

It belongs to the complex I 49 kDa subunit family. In terms of assembly, NDH-1 is composed of 14 different subunits. Subunits NuoB, C, D, E, F, and G constitute the peripheral sector of the complex.

Its subcellular location is the cell inner membrane. It catalyses the reaction a quinone + NADH + 5 H(+)(in) = a quinol + NAD(+) + 4 H(+)(out). Functionally, NDH-1 shuttles electrons from NADH, via FMN and iron-sulfur (Fe-S) centers, to quinones in the respiratory chain. The immediate electron acceptor for the enzyme in this species is believed to be ubiquinone. Couples the redox reaction to proton translocation (for every two electrons transferred, four hydrogen ions are translocated across the cytoplasmic membrane), and thus conserves the redox energy in a proton gradient. The protein is NADH-quinone oxidoreductase subunit D 2 of Sinorhizobium medicae (strain WSM419) (Ensifer medicae).